The sequence spans 54 residues: Photosystem II reaction center protein K (54 aa).

Positions 1-17 (MFQISLDMISNKINLLG) are excised as a propeptide. The helical transmembrane segment at 29-49 (IVDVLPIIPILFFLLAFVWQA) threads the bilayer.

Belongs to the PsbK family. PSII is composed of 1 copy each of membrane proteins PsbA, PsbB, PsbC, PsbD, PsbE, PsbF, PsbH, PsbI, PsbJ, PsbK, PsbL, PsbM, PsbT, PsbY, PsbZ, Psb30/Ycf12, at least 3 peripheral proteins of the oxygen-evolving complex and a large number of cofactors. It forms dimeric complexes.

The protein resides in the plastid. It localises to the chloroplast thylakoid membrane. In terms of biological role, one of the components of the core complex of photosystem II (PSII). PSII is a light-driven water:plastoquinone oxidoreductase that uses light energy to abstract electrons from H(2)O, generating O(2) and a proton gradient subsequently used for ATP formation. It consists of a core antenna complex that captures photons, and an electron transfer chain that converts photonic excitation into a charge separation. This chain is Photosystem II reaction center protein K, found in Euglena stellata.